The chain runs to 556 residues: Glucose-6-phosphate isomerase (556 aa).

Residue Glu363 is the Proton donor of the active site. Residues His394 and Lys522 contribute to the active site.

It belongs to the GPI family.

The protein resides in the cytoplasm. The enzyme catalyses alpha-D-glucose 6-phosphate = beta-D-fructose 6-phosphate. It participates in carbohydrate biosynthesis; gluconeogenesis. It functions in the pathway carbohydrate degradation; glycolysis; D-glyceraldehyde 3-phosphate and glycerone phosphate from D-glucose: step 2/4. Catalyzes the reversible isomerization of glucose-6-phosphate to fructose-6-phosphate. The protein is Glucose-6-phosphate isomerase of Frankia casuarinae (strain DSM 45818 / CECT 9043 / HFP020203 / CcI3).